The chain runs to 105 residues: Small ribosomal subunit protein uS10 (105 aa).

It belongs to the universal ribosomal protein uS10 family. Part of the 30S ribosomal subunit.

In terms of biological role, involved in the binding of tRNA to the ribosomes. The sequence is that of Small ribosomal subunit protein uS10 from Agathobacter rectalis (strain ATCC 33656 / DSM 3377 / JCM 17463 / KCTC 5835 / VPI 0990) (Eubacterium rectale).